The primary structure comprises 347 residues: GMP reductase (347 aa).

108-131 (AEFEKVKKIMALSEEFVFICIDIA) lines the NADP(+) pocket. K(+) is bound by residues Gly181 and Gly183. Catalysis depends on Cys186, which acts as the Thioimidate intermediate. 216–239 (IIGDGGCSCAGDVSKAFGGGADFV) serves as a coordination point for NADP(+).

It belongs to the IMPDH/GMPR family. GuaC type 1 subfamily. Homotetramer.

The catalysed reaction is IMP + NH4(+) + NADP(+) = GMP + NADPH + 2 H(+). In terms of biological role, catalyzes the irreversible NADPH-dependent deamination of GMP to IMP. It functions in the conversion of nucleobase, nucleoside and nucleotide derivatives of G to A nucleotides, and in maintaining the intracellular balance of A and G nucleotides. In Vibrio atlanticus (strain LGP32) (Vibrio splendidus (strain Mel32)), this protein is GMP reductase.